A 242-amino-acid chain; its full sequence is MAILRSLLLPLGLLLCLWLLCSPASCTNSTTNCKPFLSVTTKKSSLIHISPDIYKSNTLYTVSTQVSHGIISVVLEARDQNKSVIGSWENPSDHCEGRAEYYLKGNFSTLFKAKWMSPNSTDITTVKINIYTVNSLRNAELDSITLPEVGTVTVKHVSTKQVITTPTHKPTPAPPKPTTNPQKTTTNHSIPTTSLPKPTTSLYTSHPKLTTTHKSSANRAFLCPVREAIQILFIFLIGTLLF.

The first 26 residues, 1 to 26 (MAILRSLLLPLGLLLCLWLLCSPASC), serve as a signal peptide directing secretion. The Extracellular segment spans residues 27–220 (TNSTTNCKPF…TTHKSSANRA (194 aa)). N-linked (GlcNAc...) asparagine glycosylation is found at asparagine 28, asparagine 81, and asparagine 106. The interval 162–209 (VITTPTHKPTPAPPKPTTNPQKTTTNHSIPTTSLPKPTTSLYTSHPKL) is disordered. A compositionally biased stretch (pro residues) spans 169–178 (KPTPAPPKPT). A compositionally biased stretch (low complexity) spans 179-205 (TNPQKTTTNHSIPTTSLPKPTTSLYTS). The chain crosses the membrane as a helical span at residues 221-241 (FLCPVREAIQILFIFLIGTLL). Position 242 (phenylalanine 242) is a topological domain, cytoplasmic.

In terms of processing, N-glycosylated.

The protein resides in the membrane. It is found in the apical cell membrane. In terms of biological role, modulates leading keratinocyte migration and cellular adhesion to matrix proteins during a wound-healing response and promotes wound repair. May play a role during trichilemmal differentiation of the hair follicle. This Bos taurus (Bovine) protein is Placenta-expressed transcript 1 protein (PLET1).